The following is a 470-amino-acid chain: Probable glycosyltransferase At3g07620 (470 aa).

The Cytoplasmic portion of the chain corresponds to methionine 1–lysine 7. A helical; Signal-anchor transmembrane segment spans residues tyrosine 8–alanine 28. Topologically, residues lysine 29–leucine 470 are lumenal. 6 N-linked (GlcNAc...) asparagine glycosylation sites follow: asparagine 32, asparagine 73, asparagine 105, asparagine 236, asparagine 274, and asparagine 299.

Belongs to the glycosyltransferase 47 family.

It localises to the golgi apparatus membrane. In terms of biological role, may be involved in cell wall biosynthesis. The sequence is that of Probable glycosyltransferase At3g07620 from Arabidopsis thaliana (Mouse-ear cress).